The sequence spans 626 residues: Phosphomethylpyrimidine synthase (626 aa).

Positions 1–27 (MSKQEKAISLSESAQVDQQSVQPLPNS) are disordered. Residues 10–25 (LSESAQVDQQSVQPLP) are compositionally biased toward polar residues. Substrate-binding positions include asparagine 232, methionine 261, tyrosine 290, histidine 326, 346–348 (SRG), 387–390 (DGLR), and glutamate 426. Zn(2+) is bound at residue histidine 430. Position 453 (tyrosine 453) interacts with substrate. Histidine 494 is a Zn(2+) binding site. The [4Fe-4S] cluster site is built by cysteine 574, cysteine 577, and cysteine 582.

The protein belongs to the ThiC family. In terms of assembly, homodimer. Requires [4Fe-4S] cluster as cofactor.

It catalyses the reaction 5-amino-1-(5-phospho-beta-D-ribosyl)imidazole + S-adenosyl-L-methionine = 4-amino-2-methyl-5-(phosphooxymethyl)pyrimidine + CO + 5'-deoxyadenosine + formate + L-methionine + 3 H(+). It participates in cofactor biosynthesis; thiamine diphosphate biosynthesis. Functionally, catalyzes the synthesis of the hydroxymethylpyrimidine phosphate (HMP-P) moiety of thiamine from aminoimidazole ribotide (AIR) in a radical S-adenosyl-L-methionine (SAM)-dependent reaction. The polypeptide is Phosphomethylpyrimidine synthase (Pseudomonas entomophila (strain L48)).